A 383-amino-acid polypeptide reads, in one-letter code: Putative glutamate--cysteine ligase 2-2 (383 aa).

The protein belongs to the glutamate--cysteine ligase type 2 family. YbdK subfamily.

It carries out the reaction L-cysteine + L-glutamate + ATP = gamma-L-glutamyl-L-cysteine + ADP + phosphate + H(+). In terms of biological role, ATP-dependent carboxylate-amine ligase which exhibits weak glutamate--cysteine ligase activity. The chain is Putative glutamate--cysteine ligase 2-2 from Legionella pneumophila (strain Lens).